The following is a 100-amino-acid chain: Large ribosomal subunit protein bL21 (100 aa).

Belongs to the bacterial ribosomal protein bL21 family. Part of the 50S ribosomal subunit. Contacts protein L20.

Functionally, this protein binds to 23S rRNA in the presence of protein L20. The sequence is that of Large ribosomal subunit protein bL21 from Wolbachia pipientis subsp. Culex pipiens (strain wPip).